The chain runs to 431 residues: UDP-N-acetylglucosamine 1-carboxyvinyltransferase (431 aa).

A phosphoenolpyruvate-binding site is contributed by 22–23 (KN). Arg-102 lines the UDP-N-acetyl-alpha-D-glucosamine pocket. Cys-126 (proton donor) is an active-site residue. Cys-126 bears the 2-(S-cysteinyl)pyruvic acid O-phosphothioketal mark. Residues Asp-318 and Ile-340 each contribute to the UDP-N-acetyl-alpha-D-glucosamine site.

The protein belongs to the EPSP synthase family. MurA subfamily.

It is found in the cytoplasm. It catalyses the reaction phosphoenolpyruvate + UDP-N-acetyl-alpha-D-glucosamine = UDP-N-acetyl-3-O-(1-carboxyvinyl)-alpha-D-glucosamine + phosphate. It functions in the pathway cell wall biogenesis; peptidoglycan biosynthesis. Cell wall formation. Adds enolpyruvyl to UDP-N-acetylglucosamine. This Bartonella henselae (strain ATCC 49882 / DSM 28221 / CCUG 30454 / Houston 1) (Rochalimaea henselae) protein is UDP-N-acetylglucosamine 1-carboxyvinyltransferase.